Reading from the N-terminus, the 83-residue chain is MQVSVLITLAVLGVMFVWTSAAELEERGSDQPAWLKSLERIFQSEERDCRALYGGCTKDEDCCKHLACRRTLPTYCAWDLTFP.

The N-terminal stretch at 1 to 21 (MQVSVLITLAVLGVMFVWTSA) is a signal peptide. The propeptide occupies 22-47 (AELEERGSDQPAWLKSLERIFQSEER). Intrachain disulfides connect Cys49-Cys63, Cys56-Cys68, and Cys62-Cys76.

The protein belongs to the neurotoxin 10 (Hwtx-1) family. 40 (Jztx-35) subfamily. In terms of tissue distribution, expressed by the venom gland.

It is found in the secreted. In terms of biological role, probable ion channel inhibitor. This is U20-theraphotoxin-Cg1a 2 from Chilobrachys guangxiensis (Chinese earth tiger tarantula).